Here is a 279-residue protein sequence, read N- to C-terminus: Biotin synthase (279 aa).

The 227-residue stretch at 1 to 227 (MKVYLCAISN…NAMIMVAGGR (227 aa)) folds into the Radical SAM core domain. The [4Fe-4S] cluster site is built by Cys16, Cys20, and Cys23. [2Fe-2S] cluster contacts are provided by Cys60, Cys95, and Cys153.

It belongs to the radical SAM superfamily. Biotin synthase family. Homodimer. [4Fe-4S] cluster serves as cofactor. [2Fe-2S] cluster is required as a cofactor.

It carries out the reaction (4R,5S)-dethiobiotin + (sulfur carrier)-SH + 2 reduced [2Fe-2S]-[ferredoxin] + 2 S-adenosyl-L-methionine = (sulfur carrier)-H + biotin + 2 5'-deoxyadenosine + 2 L-methionine + 2 oxidized [2Fe-2S]-[ferredoxin]. The protein operates within cofactor biosynthesis; biotin biosynthesis; biotin from 7,8-diaminononanoate: step 2/2. Functionally, catalyzes the conversion of dethiobiotin (DTB) to biotin by the insertion of a sulfur atom into dethiobiotin via a radical-based mechanism. This chain is Biotin synthase, found in Nitratiruptor sp. (strain SB155-2).